Consider the following 66-residue polypeptide: DNA gyrase inhibitor YacG (66 aa).

Zn(2+)-binding residues include Cys-9, Cys-12, Cys-28, and Cys-32.

The protein belongs to the DNA gyrase inhibitor YacG family. Interacts with GyrB. The cofactor is Zn(2+).

In terms of biological role, inhibits all the catalytic activities of DNA gyrase by preventing its interaction with DNA. Acts by binding directly to the C-terminal domain of GyrB, which probably disrupts DNA binding by the gyrase. The sequence is that of DNA gyrase inhibitor YacG from Pseudomonas aeruginosa (strain LESB58).